Here is an 85-residue protein sequence, read N- to C-terminus: Small ribosomal subunit protein uS17 (85 aa).

This sequence belongs to the universal ribosomal protein uS17 family. In terms of assembly, part of the 30S ribosomal subunit.

Functionally, one of the primary rRNA binding proteins, it binds specifically to the 5'-end of 16S ribosomal RNA. The polypeptide is Small ribosomal subunit protein uS17 (Mycoplasma pneumoniae (strain ATCC 29342 / M129 / Subtype 1) (Mycoplasmoides pneumoniae)).